The sequence spans 896 residues: Zinc finger protein 574 (896 aa).

2 C2H2-type zinc fingers span residues tyrosine 16–histidine 38 and tyrosine 76–histidine 98. Serine 113 carries the post-translational modification Phosphoserine. The C2H2-type 3 zinc finger occupies tyrosine 126 to histidine 148. Phosphoserine is present on serine 164. A C2H2-type 4 zinc finger spans residues tyrosine 214–histidine 236. The segment at alanine 239 to alanine 301 is disordered. A compositionally biased stretch (polar residues) spans proline 247–serine 257. Basic and acidic residues predominate over residues histidine 274–aspartate 287. At serine 298 the chain carries Phosphoserine. 4 C2H2-type zinc fingers span residues leucine 309–histidine 331, phenylalanine 336–histidine 358, phenylalanine 364–histidine 386, and histidine 392–histidine 413. The segment at phenylalanine 434–proline 460 is disordered. The C2H2-type 9 zinc-finger motif lies at tyrosine 466–histidine 489. The segment at histidine 495–histidine 517 adopts a C2H2-type 10; degenerate zinc-finger fold. 4 C2H2-type zinc fingers span residues phenylalanine 523 to histidine 545, tyrosine 551 to histidine 573, tyrosine 579 to histidine 601, and tyrosine 607 to histidine 630. The segment at histidine 636 to alanine 659 adopts a C2H2-type 15; degenerate zinc-finger fold. The C2H2-type 16 zinc finger occupies phenylalanine 667 to histidine 689. The tract at residues alanine 687–alanine 733 is disordered. Residues alanine 707–proline 732 are compositionally biased toward low complexity. Phosphoserine is present on serine 717. Threonine 724 carries the post-translational modification Phosphothreonine. Serine 728 is modified (phosphoserine). 4 consecutive C2H2-type zinc fingers follow at residues leucine 738–histidine 760, tyrosine 766–histidine 788, phenylalanine 794–histidine 816, and tyrosine 822–histidine 844. Arginine 832 carries the post-translational modification Asymmetric dimethylarginine.

The protein belongs to the krueppel C2H2-type zinc-finger protein family.

The protein localises to the nucleus. In terms of biological role, may be involved in transcriptional regulation. This Homo sapiens (Human) protein is Zinc finger protein 574 (ZNF574).